The following is a 177-amino-acid chain: NAD(P)H-quinone oxidoreductase subunit 6, chloroplastic (177 aa).

A run of 5 helical transmembrane segments spans residues I10–T30, I33–L53, A61–M81, L92–I112, and F152–S172.

It belongs to the complex I subunit 6 family. NDH is composed of at least 16 different subunits, 5 of which are encoded in the nucleus.

It localises to the plastid. Its subcellular location is the chloroplast thylakoid membrane. It catalyses the reaction a plastoquinone + NADH + (n+1) H(+)(in) = a plastoquinol + NAD(+) + n H(+)(out). It carries out the reaction a plastoquinone + NADPH + (n+1) H(+)(in) = a plastoquinol + NADP(+) + n H(+)(out). NDH shuttles electrons from NAD(P)H:plastoquinone, via FMN and iron-sulfur (Fe-S) centers, to quinones in the photosynthetic chain and possibly in a chloroplast respiratory chain. The immediate electron acceptor for the enzyme in this species is believed to be plastoquinone. Couples the redox reaction to proton translocation, and thus conserves the redox energy in a proton gradient. The chain is NAD(P)H-quinone oxidoreductase subunit 6, chloroplastic (ndhG) from Lemna minor (Common duckweed).